The sequence spans 91 residues: Small ribosomal subunit protein bS18 (91 aa).

The disordered stretch occupies residues 1-21 (MSDERTPQRSSGPRKKRPFQR). The segment covering 12-21 (GPRKKRPFQR) has biased composition (basic residues).

Belongs to the bacterial ribosomal protein bS18 family. Part of the 30S ribosomal subunit. Forms a tight heterodimer with protein bS6.

Functionally, binds as a heterodimer with protein bS6 to the central domain of the 16S rRNA, where it helps stabilize the platform of the 30S subunit. This is Small ribosomal subunit protein bS18 from Geotalea uraniireducens (strain Rf4) (Geobacter uraniireducens).